Consider the following 305-residue polypeptide: Tyrosine recombinase XerC (305 aa).

Residues 4-95 (TSIQALINKW…AVKNFYRFLE (92 aa)) form the Core-binding (CB) domain. Positions 116 to 298 (LLPKALSEDD…SIKHLEAVYT (183 aa)) constitute a Tyr recombinase domain. Residues R159, K182, H250, R253, and H276 contribute to the active site. Y285 (O-(3'-phospho-DNA)-tyrosine intermediate) is an active-site residue.

Belongs to the 'phage' integrase family. XerC subfamily. Forms a cyclic heterotetrameric complex composed of two molecules of XerC and two molecules of XerD.

The protein localises to the cytoplasm. Functionally, site-specific tyrosine recombinase, which acts by catalyzing the cutting and rejoining of the recombining DNA molecules. The XerC-XerD complex is essential to convert dimers of the bacterial chromosome into monomers to permit their segregation at cell division. It also contributes to the segregational stability of plasmids. This Rickettsia africae (strain ESF-5) protein is Tyrosine recombinase XerC.